The chain runs to 1740 residues: Vitamin B12-dependent ribonucleoside-diphosphate reductase (1740 aa).

In terms of domain architecture, ATP-cone spans 4–96; sequence EKVMKRDGRI…LYRKKKAEIR (93 aa). Residues Thr257, 272–273, and Gly301 each bind substrate; that span reads AC. The cysteines at positions 273 and 1308 are disulfide-linked. The DOD-type homing endonuclease 1 domain occupies 443 to 582; it reads LAGFIAGDGC…VTHYLNALGI (140 aa). Asn913 (proton acceptor) is an active-site residue. 913–914 serves as a coordination point for substrate; sequence NP. Positions 1063–1194 constitute a DOD-type homing endonuclease 2 domain; the sequence is VLGWFIGDGY…VQDLLLLFGI (132 aa). Cys1297 acts as the Cysteine radical intermediate in catalysis. Substrate is bound by residues 1297–1299 and 1471–1475; these read CGE and PTGSV. Glu1299 functions as the Proton acceptor in the catalytic mechanism.

This sequence belongs to the ribonucleoside diphosphate reductase class-2 family. The cofactor is adenosylcob(III)alamin. This protein undergoes a protein self splicing that involves a post-translational excision of the intervening region (intein) followed by peptide ligation.

It catalyses the reaction a 2'-deoxyribonucleoside 5'-diphosphate + [thioredoxin]-disulfide + H2O = a ribonucleoside 5'-diphosphate + [thioredoxin]-dithiol. Functionally, provides the precursors necessary for DNA synthesis. Catalyzes the biosynthesis of deoxyribonucleotides from the corresponding ribonucleotides. The sequence is that of Vitamin B12-dependent ribonucleoside-diphosphate reductase (rnr) from Pyrococcus furiosus (strain ATCC 43587 / DSM 3638 / JCM 8422 / Vc1).